Consider the following 319-residue polypeptide: Dehydrogenase/reductase SDR family member 9 (319 aa).

The N-terminal stretch at 1–20 (MLFWLLALLFLCAFLWNYKG) is a signal peptide. NAD(+)-binding positions include 34 to 58 (ITGCDTGFGNLAARTFDKKGFRVIA) and Asp83. Ser164 is a substrate binding site. The Proton acceptor role is filled by Tyr176. NAD(+) is bound at residue Lys180.

This sequence belongs to the short-chain dehydrogenases/reductases (SDR) family. Homotetramer.

The protein resides in the microsome membrane. The protein localises to the endoplasmic reticulum membrane. It catalyses the reaction 3beta-hydroxy-5alpha-pregnane-20-one + NAD(+) = 5alpha-pregnane-3,20-dione + NADH + H(+). The catalysed reaction is 17beta-hydroxy-5alpha-androstan-3-one + NAD(+) = 5alpha-androstan-3,17-dione + NADH + H(+). It carries out the reaction androsterone + NAD(+) = 5alpha-androstan-3,17-dione + NADH + H(+). The enzyme catalyses 5alpha-androstane-3alpha,17beta-diol + NAD(+) = 17beta-hydroxy-5alpha-androstan-3-one + NADH + H(+). It catalyses the reaction all-trans-retinol + NAD(+) = all-trans-retinal + NADH + H(+). The catalysed reaction is 3alpha-hydroxy-5alpha-pregnan-20-one + NAD(+) = 5alpha-pregnane-3,20-dione + NADH + H(+). 3-alpha-hydroxysteroid dehydrogenase that converts 3-alpha-tetrahydroprogesterone (allopregnanolone) to dihydroxyprogesterone and 3-alpha-androstanediol to dihydroxyprogesterone. Also plays a role in the biosynthesis of retinoic acid. Can utilize both NADH and NADPH. This is Dehydrogenase/reductase SDR family member 9 (Dhrs9) from Mus musculus (Mouse).